Here is a 514-residue protein sequence, read N- to C-terminus: 2-isopropylmalate synthase (514 aa).

The Pyruvate carboxyltransferase domain occupies 5-268 (LIIFDTTLRD…DVGIDTTQIV (264 aa)). Aspartate 14, histidine 202, histidine 204, and asparagine 239 together coordinate Mn(2+). Positions 395-514 (KFVSLSQHSE…KDDKLNPQRS (120 aa)) are regulatory domain.

It belongs to the alpha-IPM synthase/homocitrate synthase family. LeuA type 1 subfamily. Homodimer. Mn(2+) is required as a cofactor.

It is found in the cytoplasm. The enzyme catalyses 3-methyl-2-oxobutanoate + acetyl-CoA + H2O = (2S)-2-isopropylmalate + CoA + H(+). The protein operates within amino-acid biosynthesis; L-leucine biosynthesis; L-leucine from 3-methyl-2-oxobutanoate: step 1/4. Catalyzes the condensation of the acetyl group of acetyl-CoA with 3-methyl-2-oxobutanoate (2-ketoisovalerate) to form 3-carboxy-3-hydroxy-4-methylpentanoate (2-isopropylmalate). This Burkholderia multivorans (strain ATCC 17616 / 249) protein is 2-isopropylmalate synthase.